Reading from the N-terminus, the 358-residue chain is Snurportin-1 (358 aa).

Met1 is modified (N-acetylmethionine). 2 disordered regions span residues 1–26 (MEEL…APHP) and 69–90 (DWTG…MDID). The tract at residues 1-65 (MEELSQALAS…LDYVNHARRL (65 aa)) is necessary for interaction with KPNB1 and m3G-cap U1 and U5 snRNP import receptor activity. Residues 1 to 160 (MEELSQALAS…NRFSSLLPGG (160 aa)) are necessary for interaction with XPO1. A compositionally biased stretch (polar residues) spans 7 to 22 (ALASSFSVSQELNSTA). The region spanning 11–73 (SFSVSQELNS…RLAEDDWTGM (63 aa)) is the IBB domain. Phosphoserine is present on Ser75. Positions 128 to 130 (GKR) are interaction with m3G-cap structure. A necessary for binding to the m3G-cap structure region spans residues 210–329 (MHSKLPEEEG…DTKEKLTHKA (120 aa)). The span at 315–341 (KRSQEDTKEKLTHKASENGHYELEHLS) shows a compositional bias: basic and acidic residues. The tract at residues 315-358 (KRSQEDTKEKLTHKASENGHYELEHLSTPKLRNPPHSSESLMDN) is disordered. Residues 349–358 (PHSSESLMDN) show a composition bias toward polar residues. Position 351 is a phosphoserine (Ser351).

Belongs to the snurportin family. In terms of assembly, component of an import snRNP complex composed of KPNB1, SNUPN, SMN1 and ZNF259. Component of a nuclear export receptor complex composed of KPNB1, Ran, SNUPN and XPO1. Found in a trimeric export complex with SNUPN, Ran and XPO1. Interacts (via IBB domain) with KPNB1; the interaction is direct. Interacts with DDX20, IPO7, SMN1, SNRPB and XPO1. Interacts directly with XPO1. Its interaction with XPO1 and binding to m3G-cap U snRNPs appears to be mutually exclusive. Can form homomers.

The protein localises to the nucleus. It is found in the cytoplasm. Its function is as follows. Functions as an U snRNP-specific nuclear import adapter. Involved in the trimethylguanosine (m3G)-cap-dependent nuclear import of U snRNPs. Binds specifically to the terminal m3G-cap U snRNAs. The polypeptide is Snurportin-1 (Snupn) (Mus musculus (Mouse)).